Reading from the N-terminus, the 106-residue chain is UPF0145 protein CLL_A2504 (106 aa).

Belongs to the UPF0145 family.

The sequence is that of UPF0145 protein CLL_A2504 from Clostridium botulinum (strain Eklund 17B / Type B).